Consider the following 58-residue polypeptide: Transactivator protein ORF121 (58 aa).

In terms of biological role, stimulates the expression of 39k gene most probably by increasing IE1 expression. This Lepidoptera (butterflies and moths) protein is Transactivator protein ORF121 (AC121).